Here is a 461-residue protein sequence, read N- to C-terminus: Xyloglucan 6-xylosyltransferase 2 (461 aa).

Topologically, residues 1–20 (MIERCLGAYRCRRIQRALRQ) are cytoplasmic. A helical; Signal-anchor for type II membrane protein membrane pass occupies residues 21–40 (LKVTILCLLLTVVVLRSTIG). Over 41–461 (AGKFGTPEQD…KAVKVQTNQV (421 aa)) the chain is Lumenal. Residues 74 to 95 (QTGGDSSSGDGGGNSGGSNNYE) are disordered. Asn432 carries an N-linked (GlcNAc...) asparagine glycan.

The protein belongs to the glycosyltransferase 34 family. In terms of assembly, homodimer. Interacts with XXT1 and XXT5. Interacts with FUT1 and XLT2.

It localises to the golgi apparatus membrane. The catalysed reaction is Transfers an alpha-D-xylosyl residue from UDP-D-xylose to a glucose residue in xyloglucan, forming an alpha-(1-&gt;6)-D-xylosyl-D-glucose linkage.. Its function is as follows. Xylosyltransferase specific to UDP-D-xylose that accepts both cellopentaose and cellohexaose as substrates, with a better use of cellohexaose, to produce xyloglucan. Adds preferentially the first xylosyl residue to the fourth glucosyl residue from the reducing end of both acceptors. Transfer one xylose mainly to the second glucose residue from the non-reducing end. The acceptor should have a minimum of four glucose residues. Associates with other xyloglucan-synthesizing enzymes to form multiprotein complexes for xyloglucan synthesis in the Golgi. This chain is Xyloglucan 6-xylosyltransferase 2 (XXT2), found in Arabidopsis thaliana (Mouse-ear cress).